The following is a 478-amino-acid chain: Zinc metalloproteinase/disintegrin (478 aa).

A signal peptide spans 1–20; that stretch reads MIQVLLVTICLAAFPYQGSS. Residues 21-187 constitute a propeptide that is removed on maturation; it reads IILESGNVND…PIKKASDLNL (167 aa). A Peptidase M12B domain is found at 193–389; it reads RYVELFIVVD…QKPQCILKKP (197 aa). 3 disulfides stabilise this stretch: Cys-304–Cys-384, Cys-344–Cys-368, and Cys-346–Cys-351. Residue His-329 coordinates Zn(2+). Glu-330 is a catalytic residue. Zn(2+) contacts are provided by His-333 and His-339. A propeptide spanning residues 390-407 is cleaved from the precursor; the sequence is LRTDTVSTPVSGNELLEA. Residues 397 to 478 enclose the Disintegrin domain; it reads TPVSGNELLE…ADCPRNGLYG (82 aa). Intrachain disulfides connect Cys-411-Cys-426, Cys-413-Cys-421, Cys-420-Cys-443, Cys-434-Cys-440, Cys-439-Cys-464, and Cys-452-Cys-471. A Cell attachment site; atypical (MVD) motif is present at residues 456 to 458; it reads MVD.

It belongs to the venom metalloproteinase (M12B) family. P-II subfamily. P-IIa sub-subfamily. Monomer (disintegrin). Zn(2+) is required as a cofactor. As to expression, expressed by the venom gland.

The protein resides in the secreted. The enzyme catalyses Cleavage of 3-Asn-|-Gln-4, 9-Ser-|-His-10 and 14-Ala-|-Leu-15 bonds in insulin B chain and 14-Tyr-|-Gln-15 and 8-Thr-|-Ser-9 in A chain. Cleaves type IV collagen at 73-Ala-|-Gln-74 in alpha1-(IV) and at 7-Gly-|-Leu-8 in alpha2-(IV).. Its function is as follows. Snake venom zinc metalloproteinase that causes hemorrhage by provoking the degradation of the sub-endothelial matrix proteins (fibronectin, laminin, type IV collagen, nidogen, and gelatins). Potent inhibitor of both collagen- (IC(50)=4 nM) and ADP-induced (IC(50)=8 nM) platelet aggregation. May act by binding to the platelet receptor GPIIb/GPIIIa (ITGA2B/ITGB3). The sequence is that of Zinc metalloproteinase/disintegrin from Crotalus atrox (Western diamondback rattlesnake).